Reading from the N-terminus, the 301-residue chain is GTPase Era (301 aa).

Positions 7 to 175 (YCGFIAIVGR…AGIVRKHLPE (169 aa)) constitute an Era-type G domain. Residues 15–22 (GRPNVGKS) form a G1 region. A GTP-binding site is contributed by 15-22 (GRPNVGKS). Residues 41 to 45 (QTTRH) form a G2 region. The interval 62-65 (DTPG) is G3. GTP is bound by residues 62 to 66 (DTPGL) and 124 to 127 (NKVD). The G4 stretch occupies residues 124 to 127 (NKVD). The segment at 154-156 (ISA) is G5. The KH type-2 domain maps to 206-283 (LGAELPYSVT…HLELWVKVKS (78 aa)).

Belongs to the TRAFAC class TrmE-Era-EngA-EngB-Septin-like GTPase superfamily. Era GTPase family. As to quaternary structure, monomer.

It is found in the cytoplasm. The protein resides in the cell inner membrane. Its function is as follows. An essential GTPase that binds both GDP and GTP, with rapid nucleotide exchange. Plays a role in 16S rRNA processing and 30S ribosomal subunit biogenesis and possibly also in cell cycle regulation and energy metabolism. The protein is GTPase Era of Salmonella heidelberg (strain SL476).